The primary structure comprises 189 residues: Mitochondrial FAD-linked sulfhydryl oxidase ERV1 (189 aa).

Positions 83-183 constitute an ERV/ALR sulfhydryl oxidase domain; that stretch reads DPPDVEQLGR…FDCNFWEKRW (101 aa). Residues 88 to 95, His-99, and Tyr-128 contribute to the FAD site; that span reads EQLGRSSW. Cystine bridges form between Cys-130-Cys-133 and Cys-159-Cys-176. Residues 159-171 and 182-183 each bind FAD; these read CEAHNKVNKKLRK and RW.

In terms of assembly, homodimer. Interacts with MIA40, forming transient intermolecular disulfide bridges. The cofactor is FAD.

It localises to the mitochondrion intermembrane space. The enzyme catalyses 2 R'C(R)SH + O2 = R'C(R)S-S(R)CR' + H2O2. Its function is as follows. FAD-dependent sulfhydryl oxidase that catalyzes disulfide bond formation. Required for the import and folding of small cysteine-containing proteins in the mitochondrial intermembrane space (IMS). Forms a redox cycle with MIA40 that involves a disulfide relay system. Important for maintaining the cysteine residues in MIA40 in an oxidized state. Reduced ERV1 is reoxidized by cytochrome c. Required for the maturation of cytoplasmic, but not of mitochondrial Fe/S proteins. This chain is Mitochondrial FAD-linked sulfhydryl oxidase ERV1 (ERV1), found in Saccharomyces cerevisiae (strain ATCC 204508 / S288c) (Baker's yeast).